The chain runs to 192 residues: GTP cyclohydrolase 1 (192 aa).

Residues Cys-82, His-85, and Cys-153 each coordinate Zn(2+).

Belongs to the GTP cyclohydrolase I family. In terms of assembly, toroid-shaped homodecamer, composed of two pentamers of five dimers.

The enzyme catalyses GTP + H2O = 7,8-dihydroneopterin 3'-triphosphate + formate + H(+). It functions in the pathway cofactor biosynthesis; 7,8-dihydroneopterin triphosphate biosynthesis; 7,8-dihydroneopterin triphosphate from GTP: step 1/1. The polypeptide is GTP cyclohydrolase 1 (Rickettsia bellii (strain OSU 85-389)).